Consider the following 295-residue polypeptide: Ribosomal RNA small subunit methyltransferase H (295 aa).

Residues 35–37 (GGH), glutamate 55, phenylalanine 82, aspartate 103, and glutamine 110 each bind S-adenosyl-L-methionine.

This sequence belongs to the methyltransferase superfamily. RsmH family.

The protein resides in the cytoplasm. The enzyme catalyses cytidine(1402) in 16S rRNA + S-adenosyl-L-methionine = N(4)-methylcytidine(1402) in 16S rRNA + S-adenosyl-L-homocysteine + H(+). Its function is as follows. Specifically methylates the N4 position of cytidine in position 1402 (C1402) of 16S rRNA. This chain is Ribosomal RNA small subunit methyltransferase H, found in Desulfotalea psychrophila (strain LSv54 / DSM 12343).